The chain runs to 310 residues: Apolipoprotein E (310 aa).

The first 18 residues, 1 to 18 (MKVLWAALVVTLLAGCGA), serve as a signal peptide directing secretion. A run of 8 repeats spans residues 77–98 (ALMD…EQLG), 99–120 (PVTE…ARLG), 121–142 (ADME…AMVG), 143–164 (QSTE…KRLL), 165–186 (RDAE…EGAE), 187–208 (RSVN…TVHT), 209–226 (LVSK…QRLR), and 227–248 (GRLE…EQVQ). The 8 X 22 AA approximate tandem repeats stretch occupies residues 77 to 248 (ALMDDTMKEV…RLDEVREQVQ (172 aa)). Residues 155-165 (HLRKMRKRLLR) are LDL and other lipoprotein receptors binding. Residue 159 to 162 (MRKR) participates in heparin binding. The segment at 207–283 (HTLVSKPLQE…SWFEPLVQDM (77 aa)) is lipid-binding and lipoprotein association. A heparin-binding site is contributed by 222–229 (AQRLRGRL). The tract at residues 259–310 (NQVRLQAEAFQGRLKSWFEPLVQDMQQKWAELVEKVQLAVGAVPTSVPSEKQ) is homooligomerization. A specificity for association with VLDL region spans residues 271–283 (RLKSWFEPLVQDM).

Belongs to the apolipoprotein A1/A4/E family. In terms of assembly, homotetramer. May interact with ABCA1; functionally associated with ABCA1 in the biogenesis of HDLs. May interact with APP/A4 amyloid-beta peptide; the interaction is extremely stable in vitro but its physiological significance is unclear. May interact with MAPT. May interact with MAP2. In the cerebrospinal fluid, interacts with secreted SORL1. Interacts with PMEL; this allows the loading of PMEL luminal fragment on ILVs to induce fibril nucleation. APOE exists as multiple glycosylated and sialylated glycoforms within cells and in plasma. The extent of glycosylation and sialylation are tissue and context specific. Post-translationally, glycated in plasma VLDL. In terms of processing, phosphorylated by FAM20C in the extracellular medium.

The protein localises to the secreted. It localises to the extracellular space. The protein resides in the extracellular matrix. It is found in the extracellular vesicle. Its subcellular location is the endosome. The protein localises to the multivesicular body. Functionally, APOE is an apolipoprotein, a protein associating with lipid particles, that mainly functions in lipoprotein-mediated lipid transport between organs via the plasma and interstitial fluids. APOE is a core component of plasma lipoproteins and is involved in their production, conversion and clearance. Apolipoproteins are amphipathic molecules that interact both with lipids of the lipoprotein particle core and the aqueous environment of the plasma. As such, APOE associates with chylomicrons, chylomicron remnants, very low density lipoproteins (VLDL) and intermediate density lipoproteins (IDL) but shows a preferential binding to high-density lipoproteins (HDL). It also binds a wide range of cellular receptors including the LDL receptor/LDLR and the very low-density lipoprotein receptor/VLDLR that mediate the cellular uptake of the APOE-containing lipoprotein particles. Finally, APOE also has a heparin-binding activity and binds heparan-sulfate proteoglycans on the surface of cells, a property that supports the capture and the receptor-mediated uptake of APOE-containing lipoproteins by cells. This chain is Apolipoprotein E (APOE), found in Ceratotherium simum cottoni (Northern white rhinoceros).